The primary structure comprises 265 residues: Enolase-phosphatase E1 (265 aa).

Residues Asp18 and Glu20 each contribute to the Mg(2+) site. Substrate is bound by residues 144–145 and Lys188; that span reads SS. Asp215 provides a ligand contact to Mg(2+).

It belongs to the HAD-like hydrolase superfamily. MasA/MtnC family. As to quaternary structure, monomer. Mg(2+) serves as cofactor.

It is found in the cytoplasm. The protein resides in the nucleus. It carries out the reaction 5-methylsulfanyl-2,3-dioxopentyl phosphate + H2O = 1,2-dihydroxy-5-(methylsulfanyl)pent-1-en-3-one + phosphate. It participates in amino-acid biosynthesis; L-methionine biosynthesis via salvage pathway; L-methionine from S-methyl-5-thio-alpha-D-ribose 1-phosphate: step 3/6. It functions in the pathway amino-acid biosynthesis; L-methionine biosynthesis via salvage pathway; L-methionine from S-methyl-5-thio-alpha-D-ribose 1-phosphate: step 4/6. Its function is as follows. Bifunctional enzyme that catalyzes the enolization of 2,3-diketo-5-methylthiopentyl-1-phosphate (DK-MTP-1-P) into the intermediate 2-hydroxy-3-keto-5-methylthiopentenyl-1-phosphate (HK-MTPenyl-1-P), which is then dephosphorylated to form the acireductone 1,2-dihydroxy-3-keto-5-methylthiopentene (DHK-MTPene). This Candida albicans (strain SC5314 / ATCC MYA-2876) (Yeast) protein is Enolase-phosphatase E1.